A 155-amino-acid polypeptide reads, in one-letter code: MSLIPSFFGNNRRINNNIFDPFSLDVWDPFKELQFPSSSSSAIANARVDWKETAEAHVFKADLPGMKKEEVKVEIEDDSVLKISGERHVEKEEKQDTWHRVERSSGGFSRKFRLPENVKMDQVKASMENGVLTVTVPKVETNKKKAQVKSIDISG.

In terms of domain architecture, sHSP spans 39 to 154 (SSSAIANARV…KAQVKSIDIS (116 aa)).

It belongs to the small heat shock protein (HSP20) family. In terms of assembly, forms oligomeric structures. Binds to AKR2A.

The protein resides in the cytoplasm. Possesses chaperone activity. The chain is 17.6 kDa class I heat shock protein 1 (HSP17.6A) from Arabidopsis thaliana (Mouse-ear cress).